We begin with the raw amino-acid sequence, 412 residues long: Chorismate synthase (412 aa).

2 residues coordinate NADP(+): Arg-40 and Arg-46. FMN contacts are provided by residues Arg-135–Ser-137, Gln-256–Ala-257, Gly-300, Lys-315–Thr-319, and Arg-341. The segment covering Gln-391–Ala-404 has biased composition (basic and acidic residues). The segment at Gln-391 to Gly-412 is disordered.

Belongs to the chorismate synthase family. Homotetramer. FMNH2 serves as cofactor.

The enzyme catalyses 5-O-(1-carboxyvinyl)-3-phosphoshikimate = chorismate + phosphate. Its pathway is metabolic intermediate biosynthesis; chorismate biosynthesis; chorismate from D-erythrose 4-phosphate and phosphoenolpyruvate: step 7/7. In terms of biological role, catalyzes the anti-1,4-elimination of the C-3 phosphate and the C-6 proR hydrogen from 5-enolpyruvylshikimate-3-phosphate (EPSP) to yield chorismate, which is the branch point compound that serves as the starting substrate for the three terminal pathways of aromatic amino acid biosynthesis. This reaction introduces a second double bond into the aromatic ring system. The chain is Chorismate synthase from Mycobacteroides abscessus (strain ATCC 19977 / DSM 44196 / CCUG 20993 / CIP 104536 / JCM 13569 / NCTC 13031 / TMC 1543 / L948) (Mycobacterium abscessus).